Reading from the N-terminus, the 1902-residue chain is PII-type proteinase (1902 aa).

Positions 1 to 33 (MQRKKKGLSILLAGTVALGALAVLPVGEIQAKA) are cleaved as a signal peptide. Positions 34–187 (AISQQTKGSS…VTLAKVYYPT (154 aa)) are excised as a propeptide. The Peptidase S8 domain occupies 191–697 (ANSMANVQAV…AGLVDVKAAI (507 aa)). Active-site charge relay system residues include D217, H281, and S620. Residues 1796 to 1874 (GKGDGTTGTS…GALPKTGETT (79 aa)) form a disordered region. Residues 1797 to 1812 (KGDGTTGTSDKGGGQG) are compositionally biased toward gly residues. The span at 1830 to 1843 (SQPSSGGNIPTNPA) shows a compositional bias: polar residues. The LPXTG sorting signal motif lies at 1867-1871 (LPKTG). T1870 is modified (pentaglycyl murein peptidoglycan amidated threonine). Positions 1871 to 1902 (GETTERPAFGFLGVIVVSLMGVLGLKRKQREE) are cleaved as a propeptide — removed by sortase.

The protein belongs to the peptidase S8 family.

It is found in the secreted. The protein resides in the cell wall. The enzyme catalyses Endopeptidase activity with very broad specificity, although some subsite preference have been noted, e.g. large hydrophobic residues in the P1 and P4 positions, and Pro in the P2 position. Best known for its action on caseins, although it has been shown to hydrolyze hemoglobin and oxidized insulin B-chain.. In terms of biological role, protease which breaks down milk proteins during the growth of the bacteria on milk. In Lactococcus lactis subsp. cremoris (Streptococcus cremoris), this protein is PII-type proteinase (prt).